A 429-amino-acid chain; its full sequence is Chaperone SurA (429 aa).

An N-terminal signal peptide occupies residues 1-18 (MFKRIALVCALFSGVCFA). PpiC domains are found at residues 170 to 271 (NLTY…KLVA) and 281 to 380 (ITQT…EVIA).

It localises to the periplasm. The enzyme catalyses [protein]-peptidylproline (omega=180) = [protein]-peptidylproline (omega=0). Its function is as follows. Chaperone involved in the correct folding and assembly of outer membrane proteins. Recognizes specific patterns of aromatic residues and the orientation of their side chains, which are found more frequently in integral outer membrane proteins. May act in both early periplasmic and late outer membrane-associated steps of protein maturation. The chain is Chaperone SurA from Legionella pneumophila subsp. pneumophila (strain Philadelphia 1 / ATCC 33152 / DSM 7513).